The sequence spans 102 residues: MQGQTIRIRLKAFDYRVLDASTQEIVNTAKRTGAQVRGPIPLPNKIEKFTVLRGPHIDKKSRDQWEIRTHKRLLDIVDPTPQTVDALMKLDLAAGVDIQIKV.

The protein belongs to the universal ribosomal protein uS10 family. As to quaternary structure, part of the 30S ribosomal subunit.

Functionally, involved in the binding of tRNA to the ribosomes. The polypeptide is Small ribosomal subunit protein uS10 (Cereibacter sphaeroides (strain ATCC 17029 / ATH 2.4.9) (Rhodobacter sphaeroides)).